The following is a 236-amino-acid chain: Sugar fermentation stimulation protein homolog (236 aa).

This sequence belongs to the SfsA family.

This is Sugar fermentation stimulation protein homolog from Paramagnetospirillum magneticum (strain ATCC 700264 / AMB-1) (Magnetospirillum magneticum).